The following is a 505-amino-acid chain: 2,3-bisphosphoglycerate-independent phosphoglycerate mutase (505 aa).

Residues aspartate 12 and serine 62 each coordinate Mn(2+). The Phosphoserine intermediate role is filled by serine 62. Residues histidine 123, 153–154, arginine 185, arginine 191, 257–260, and lysine 330 contribute to the substrate site; these read RD and RPDR. Residues aspartate 397, histidine 401, aspartate 438, histidine 439, and histidine 456 each coordinate Mn(2+).

The protein belongs to the BPG-independent phosphoglycerate mutase family. As to quaternary structure, monomer. Mn(2+) serves as cofactor.

It carries out the reaction (2R)-2-phosphoglycerate = (2R)-3-phosphoglycerate. It functions in the pathway carbohydrate degradation; glycolysis; pyruvate from D-glyceraldehyde 3-phosphate: step 3/5. In terms of biological role, catalyzes the interconversion of 2-phosphoglycerate and 3-phosphoglycerate. This is 2,3-bisphosphoglycerate-independent phosphoglycerate mutase from Staphylococcus haemolyticus (strain JCSC1435).